Here is a 372-residue protein sequence, read N- to C-terminus: uncharacterized protein (372 aa).

Composition is skewed to basic residues over residues Met-1–Lys-11 and Arg-38–Arg-48. The interval Met-1–Trp-127 is disordered. The span at Gly-50–Glu-61 shows a compositional bias: basic and acidic residues. Over residues Gly-93–Pro-104 the composition is skewed to polar residues.

This is an uncharacterized protein from Psittacid herpesvirus 1 (isolate Amazon parrot/-/97-0001/1997) (PsHV-1).